The primary structure comprises 80 residues: Putative ATP-dependent Clp protease proteolytic subunit (80 aa).

Residue histidine 19 is part of the active site.

This sequence belongs to the peptidase S14 family. As to quaternary structure, component of the chloroplastic Clp protease core complex.

It is found in the plastid. Its subcellular location is the chloroplast. The catalysed reaction is Hydrolysis of proteins to small peptides in the presence of ATP and magnesium. alpha-casein is the usual test substrate. In the absence of ATP, only oligopeptides shorter than five residues are hydrolyzed (such as succinyl-Leu-Tyr-|-NHMec, and Leu-Tyr-Leu-|-Tyr-Trp, in which cleavage of the -Tyr-|-Leu- and -Tyr-|-Trp bonds also occurs).. Functionally, cleaves peptides in various proteins in a process that requires ATP hydrolysis. Has a chymotrypsin-like activity. Plays a major role in the degradation of misfolded proteins. This Pinus strobus (Eastern white pine) protein is Putative ATP-dependent Clp protease proteolytic subunit.